The sequence spans 511 residues: Maturase K (511 aa).

Belongs to the intron maturase 2 family. MatK subfamily.

The protein localises to the plastid. It localises to the chloroplast. In terms of biological role, usually encoded in the trnK tRNA gene intron. Probably assists in splicing its own and other chloroplast group II introns. This Nandina domestica (Heavenly bamboo) protein is Maturase K.